The sequence spans 273 residues: Dermonecrotic toxin LdSicTox-alphaIB1bi (273 aa).

The active site involves histidine 5. Mg(2+) contacts are provided by glutamate 25 and aspartate 27. The Nucleophile role is filled by histidine 41. Intrachain disulfides connect cysteine 45–cysteine 51 and cysteine 47–cysteine 190. Aspartate 85 serves as a coordination point for Mg(2+). N-linked (GlcNAc...) asparagine glycosylation occurs at asparagine 250.

It belongs to the arthropod phospholipase D family. Class II subfamily. Mg(2+) is required as a cofactor. As to expression, expressed by the venom gland.

The protein resides in the secreted. The catalysed reaction is an N-(acyl)-sphingosylphosphocholine = an N-(acyl)-sphingosyl-1,3-cyclic phosphate + choline. The enzyme catalyses an N-(acyl)-sphingosylphosphoethanolamine = an N-(acyl)-sphingosyl-1,3-cyclic phosphate + ethanolamine. It carries out the reaction a 1-acyl-sn-glycero-3-phosphocholine = a 1-acyl-sn-glycero-2,3-cyclic phosphate + choline. It catalyses the reaction a 1-acyl-sn-glycero-3-phosphoethanolamine = a 1-acyl-sn-glycero-2,3-cyclic phosphate + ethanolamine. Functionally, dermonecrotic toxins cleave the phosphodiester linkage between the phosphate and headgroup of certain phospholipids (sphingolipid and lysolipid substrates), forming an alcohol (often choline) and a cyclic phosphate. This toxin acts on sphingomyelin (SM). It may also act on ceramide phosphoethanolamine (CPE), lysophosphatidylcholine (LPC) and lysophosphatidylethanolamine (LPE), but not on lysophosphatidylserine (LPS), and lysophosphatidylglycerol (LPG). It acts by transphosphatidylation, releasing exclusively cyclic phosphate products as second products. Induces dermonecrosis, hemolysis, increased vascular permeability, edema, inflammatory response, and platelet aggregation. In Loxosceles deserta (Desert recluse spider), this protein is Dermonecrotic toxin LdSicTox-alphaIB1bi.